Here is a 60-residue protein sequence, read N- to C-terminus: Potassium channel toxin alpha-KTx 29.2 (60 aa).

The first 28 residues, 1 to 28, serve as a signal peptide directing secretion; sequence MKSVCGVLIILVVLTTMLSISTFSTVGA. Cystine bridges form between Cys32/Cys51, Cys40/Cys56, and Cys44/Cys58.

It belongs to the short scorpion toxin superfamily. Potassium channel inhibitor family. Alpha-KTx 29 subfamily. As to expression, expressed by the venom gland.

It localises to the secreted. Its function is as follows. Weakly inhibits the Kv1.3/KCNA3 channel (1 uM of thetoxin inhibits currents by 13.2%) and Kv7.1/KCNQ1 channel (10 uM of the toxin inhibits currents by 27.7%). This is Potassium channel toxin alpha-KTx 29.2 from Lychas mucronatus (Chinese swimming scorpion).